We begin with the raw amino-acid sequence, 134 residues long: Large-conductance mechanosensitive channel (134 aa).

A run of 2 helical transmembrane segments spans residues 16-36 (VIDL…VTAL) and 84-104 (INTL…IKVI).

Belongs to the MscL family. In terms of assembly, homopentamer.

It is found in the cell inner membrane. In terms of biological role, channel that opens in response to stretch forces in the membrane lipid bilayer. May participate in the regulation of osmotic pressure changes within the cell. This chain is Large-conductance mechanosensitive channel, found in Stenotrophomonas maltophilia (strain R551-3).